We begin with the raw amino-acid sequence, 508 residues long: ATP synthase subunit alpha, chloroplastic (508 aa).

170 to 177 provides a ligand contact to ATP; sequence GDRQTGKT.

This sequence belongs to the ATPase alpha/beta chains family. As to quaternary structure, F-type ATPases have 2 components, CF(1) - the catalytic core - and CF(0) - the membrane proton channel. CF(1) has five subunits: alpha(3), beta(3), gamma(1), delta(1), epsilon(1). CF(0) has four main subunits: a, b, b' and c.

Its subcellular location is the plastid. The protein resides in the chloroplast thylakoid membrane. The enzyme catalyses ATP + H2O + 4 H(+)(in) = ADP + phosphate + 5 H(+)(out). Produces ATP from ADP in the presence of a proton gradient across the membrane. The alpha chain is a regulatory subunit. This is ATP synthase subunit alpha, chloroplastic from Helianthus annuus (Common sunflower).